The primary structure comprises 612 residues: MTDKEKRLQRQSRIRNFSIIAHIDHGKSTLADRILEKTAAITQREMKEQLLDSMDLERERGITIKLNSVQLKYQAKDGEEYIFHLIDTPGHVDFTYEVSRSLAACEGAILVVDAAQGIEAQTLANVYLALDNDLEILPVINKIDLPSAEPERVRQEVEDVIGLDASEAVLASAKAGIGIEEILEQIVEKVPAPSGDPEAPLQALIFDSLYDAYRGVVAYIRVVQGTVKAGQKIKMMATGKEFEVTEVGVFTPKAVPADELTVGDVGFLTAAIKNVGDTRVGDTITSAENPAPEALPGYRKLNPMVYCGLYPIDTAKYNDLREALEKLELNDSALQYEAETSQALGFGFRCGFLGMLHMEIIQERIEREFNIDLITTAPSVIYDVYMTDGEKIVVDNPSNMPDPQKIDRVEEPFVKATMMVPNDFVGAVMELCQGKRGQFIDMQYLDANRVSIVYEIPLAEIVYEFFDQLKSNTKGYASFDYELIGYKPSKLVKMDIMLNGEKIDALSFIVHRDYAYERGKVIVEKLKELIPRQQFEVPVQAAIGTKIVARSTIKAMRKNVLAKCYGGDISRKRKLLEKQKEGKRRMKQVGSVEVPQEAFMAVLKMDDSGPKS.

One can recognise a tr-type G domain in the interval 12-194 (SRIRNFSIIA…QIVEKVPAPS (183 aa)). GTP is bound by residues 24-29 (DHGKST) and 141-144 (NKID).

It belongs to the TRAFAC class translation factor GTPase superfamily. Classic translation factor GTPase family. LepA subfamily.

It localises to the cell membrane. The catalysed reaction is GTP + H2O = GDP + phosphate + H(+). Its function is as follows. Required for accurate and efficient protein synthesis under certain stress conditions. May act as a fidelity factor of the translation reaction, by catalyzing a one-codon backward translocation of tRNAs on improperly translocated ribosomes. Back-translocation proceeds from a post-translocation (POST) complex to a pre-translocation (PRE) complex, thus giving elongation factor G a second chance to translocate the tRNAs correctly. Binds to ribosomes in a GTP-dependent manner. The chain is Elongation factor 4 from Bacillus licheniformis (strain ATCC 14580 / DSM 13 / JCM 2505 / CCUG 7422 / NBRC 12200 / NCIMB 9375 / NCTC 10341 / NRRL NRS-1264 / Gibson 46).